A 341-amino-acid chain; its full sequence is UDP-3-O-(3-hydroxymyristoyl)glucosamine N-acyltransferase (341 aa).

The active-site Proton acceptor is the His239.

It belongs to the transferase hexapeptide repeat family. LpxD subfamily. Homotrimer.

The enzyme catalyses a UDP-3-O-[(3R)-3-hydroxyacyl]-alpha-D-glucosamine + a (3R)-hydroxyacyl-[ACP] = a UDP-2-N,3-O-bis[(3R)-3-hydroxyacyl]-alpha-D-glucosamine + holo-[ACP] + H(+). It catalyses the reaction UDP-3-O-[(3R)-3-hydroxytetradecanoyl]-alpha-D-glucosamine + (3R)-hydroxytetradecanoyl-[ACP] = UDP-2-N,3-O-bis[(3R)-3-hydroxytetradecanoyl]-alpha-D-glucosamine + holo-[ACP] + H(+). Its pathway is glycolipid biosynthesis; lipid IV(A) biosynthesis; lipid IV(A) from (3R)-3-hydroxytetradecanoyl-[acyl-carrier-protein] and UDP-N-acetyl-alpha-D-glucosamine: step 3/6. Functionally, catalyzes the N-acylation of UDP-3-O-(hydroxytetradecanoyl)glucosamine using 3-hydroxytetradecanoyl-ACP as the acyl donor. Is involved in the biosynthesis of lipid A, a phosphorylated glycolipid that anchors the lipopolysaccharide to the outer membrane of the cell. This Shigella dysenteriae serotype 1 (strain Sd197) protein is UDP-3-O-(3-hydroxymyristoyl)glucosamine N-acyltransferase.